The primary structure comprises 191 residues: Protein LIGHT-DEPENDENT SHORT HYPOCOTYLS 9 (191 aa).

Basic and acidic residues predominate over residues 1–14; sequence MSSDRHTPTKDPPD. 2 disordered regions span residues 1–41 and 153–191; these read MSSD…YESQ and QAKA…QSFT. An ALOG domain is found at 37 to 165; it reads RYESQKRRDW…ARGIPYRKKK (129 aa). A compositionally biased stretch (basic residues) spans 160-169; sequence PYRKKKRRKT. The short motif at 163–167 is the Nuclear localization signal element; that stretch reads KKKRR. Over residues 181-191 the composition is skewed to polar residues; sequence ANSSTPNQSFT.

This sequence belongs to the plant homeotic and developmental regulators ALOG protein family.

Its subcellular location is the nucleus. Functionally, probable transcription regulator that acts as a developmental regulator by promoting cell growth in response to light. This Arabidopsis thaliana (Mouse-ear cress) protein is Protein LIGHT-DEPENDENT SHORT HYPOCOTYLS 9 (LSH9).